The chain runs to 368 residues: HECT-type ubiquitin ligase-interacting protein apyA (368 aa).

This sequence belongs to the arrestin family. As to quaternary structure, interacts with hulA.

May be involved in signaling by recognizing appropriately phosphorylated substrates via its arrestin domains and then recruit a HECT-type ubiquitin ligase such as hulA, leading to ubiquitination of the substrate, providing a link between ubiquitination and phosphorylation in protein regulation and stability. In Emericella nidulans (strain FGSC A4 / ATCC 38163 / CBS 112.46 / NRRL 194 / M139) (Aspergillus nidulans), this protein is HECT-type ubiquitin ligase-interacting protein apyA (apyA).